We begin with the raw amino-acid sequence, 542 residues long: 2,3-bisphosphoglycerate-independent phosphoglycerate mutase (542 aa).

Positions 13 and 63 each coordinate Mn(2+). The active-site Phosphoserine intermediate is the serine 63. Residues histidine 124, 154-155 (RD), arginine 186, arginine 192, 263-266 (RADR), and lysine 357 contribute to the substrate site. Positions 424, 428, 465, 466, and 484 each coordinate Mn(2+).

The protein belongs to the BPG-independent phosphoglycerate mutase family. In terms of assembly, monomer. It depends on Mn(2+) as a cofactor.

The catalysed reaction is (2R)-2-phosphoglycerate = (2R)-3-phosphoglycerate. It functions in the pathway carbohydrate degradation; glycolysis; pyruvate from D-glyceraldehyde 3-phosphate: step 3/5. Catalyzes the interconversion of 2-phosphoglycerate and 3-phosphoglycerate. In Herpetosiphon aurantiacus (strain ATCC 23779 / DSM 785 / 114-95), this protein is 2,3-bisphosphoglycerate-independent phosphoglycerate mutase.